Here is a 431-residue protein sequence, read N- to C-terminus: Tyrosine--tRNA ligase (431 aa).

Residue tyrosine 34 coordinates L-tyrosine. Residues 39 to 48 (PTADSLHIGH) carry the 'HIGH' region motif. 2 residues coordinate L-tyrosine: tyrosine 171 and glutamine 175. Positions 231 to 235 (KFGKT) match the 'KMSKS' region motif. Lysine 234 contacts ATP. The region spanning 353 to 422 (INAVEALVKT…GKYTILRRGK (70 aa)) is the S4 RNA-binding domain.

Belongs to the class-I aminoacyl-tRNA synthetase family. TyrS type 1 subfamily. In terms of assembly, homodimer.

Its subcellular location is the cytoplasm. It carries out the reaction tRNA(Tyr) + L-tyrosine + ATP = L-tyrosyl-tRNA(Tyr) + AMP + diphosphate + H(+). Functionally, catalyzes the attachment of tyrosine to tRNA(Tyr) in a two-step reaction: tyrosine is first activated by ATP to form Tyr-AMP and then transferred to the acceptor end of tRNA(Tyr). The sequence is that of Tyrosine--tRNA ligase from Neisseria gonorrhoeae (strain ATCC 700825 / FA 1090).